Here is a 244-residue protein sequence, read N- to C-terminus: Type III pantothenate kinase (244 aa).

An ATP-binding site is contributed by 9 to 16 (DAGNSSLK). Substrate is bound by residues Tyr90 and 97–100 (GVDR). Asp99 functions as the Proton acceptor in the catalytic mechanism. ATP is bound at residue Thr122. Thr172 lines the substrate pocket.

It belongs to the type III pantothenate kinase family. Homodimer. The cofactor is NH4(+). Requires K(+) as cofactor.

The protein resides in the cytoplasm. It carries out the reaction (R)-pantothenate + ATP = (R)-4'-phosphopantothenate + ADP + H(+). Its pathway is cofactor biosynthesis; coenzyme A biosynthesis; CoA from (R)-pantothenate: step 1/5. Functionally, catalyzes the phosphorylation of pantothenate (Pan), the first step in CoA biosynthesis. The polypeptide is Type III pantothenate kinase (Thiobacillus denitrificans (strain ATCC 25259 / T1)).